A 201-amino-acid chain; its full sequence is Probable chemoreceptor glutamine deamidase CheD 1 (201 aa).

Belongs to the CheD family.

It carries out the reaction L-glutaminyl-[protein] + H2O = L-glutamyl-[protein] + NH4(+). In terms of biological role, probably deamidates glutamine residues to glutamate on methyl-accepting chemotaxis receptors (MCPs), playing an important role in chemotaxis. The chain is Probable chemoreceptor glutamine deamidase CheD 1 from Dechloromonas aromatica (strain RCB).